Reading from the N-terminus, the 217-residue chain is MSEAVKNLVNNDLADVMFNRHSVRQFDPNVKIGRDELQKMIAEAATAPSACNLQSWHFVVVDTPEAKAKFKQAVMKFNYPQVDSASAIVFIAGDTQSHYVYRDVWNKVYEDGNITKERLDQILGTFLPLYENATPDFLKFDATIDCSVVGMQLLLVARAHGYDANAFSGIDFEKMIPTLGLDPKRYVPVMGIAIGKAAQEPLHTTRYDAKTQTDFLA.

Residues R20, S22, and R24 each contribute to the FMN site. C51 is a binding site for 10-oxooctadecanoate. The FMN site is built by N78 and Q81. R118 is a 10-oxooctadecanoate binding site. FMN contacts are provided by N165, S168, G169, and R206.

This sequence belongs to the nitroreductase family. As to quaternary structure, homodimer. Requires FMN as cofactor.

It carries out the reaction 10-oxo-(11E)-octadecenoate + NADH + H(+) = 10-oxooctadecanoate + NAD(+). It functions in the pathway lipid metabolism; fatty acid metabolism. Is involved in a saturation metabolic pathway of polyunsaturated fatty acids, that detoxifies unsaturated fatty acids and generates hydroxy fatty acids, oxo fatty acids, conjugated fatty acids such as conjugated linoleic acids (CLAs), and partially saturated trans-fatty acids as intermediates. CLA-ER catalyzes the saturation of the carbon-carbon double bond in 10-oxo-(11E)-octadecenoate to produce 10-oxooctadecanoate, during linoleate metabolism. As part of the gut microbiome, this enzyme modifies host fatty acid composition and is expected to improve human health by altering lipid metabolism related to the onset of metabolic syndrome. The sequence is that of CLA biosynthesis enone reductase from Lactiplantibacillus plantarum (Lactobacillus plantarum).